We begin with the raw amino-acid sequence, 777 residues long: Myotubularin-related protein 10 (777 aa).

Residues 196–217 (PSGDGGGGGGGGNGAGGGSSQK) are disordered. A compositionally biased stretch (gly residues) spans 197-214 (SGDGGGGGGGGNGAGGGS). The 441-residue stretch at 221–661 (FETYSDWDRE…THIKLWKLCY (441 aa)) folds into the Myotubularin phosphatase domain. Phosphoserine is present on residues Ser-607 and Ser-751.

Belongs to the protein-tyrosine phosphatase family. Non-receptor class myotubularin subfamily.

This is Myotubularin-related protein 10 (MTMR10) from Homo sapiens (Human).